A 365-amino-acid chain; its full sequence is Holliday junction branch migration complex subunit RuvB (365 aa).

The interval 1–191 is large ATPase domain (RuvB-L); that stretch reads MSPELGGGYD…FGFTAHMDFY (191 aa). Residues Leu-30, Arg-31, Gly-72, Lys-75, Thr-76, Ser-77, 138–140, Arg-181, Tyr-191, and Arg-228 each bind ATP; that span reads EDF. Thr-76 contacts Mg(2+). The tract at residues 192–262 is small ATPAse domain (RuvB-S); that stretch reads EPAELKQILM…IAHAALAVYD (71 aa). A head domain (RuvB-H) region spans residues 265 to 365; sequence QLGLDRLDRS…QASLFDPEDP (101 aa). Positions 320 and 325 each coordinate DNA.

Belongs to the RuvB family. In terms of assembly, homohexamer. Forms an RuvA(8)-RuvB(12)-Holliday junction (HJ) complex. HJ DNA is sandwiched between 2 RuvA tetramers; dsDNA enters through RuvA and exits via RuvB. An RuvB hexamer assembles on each DNA strand where it exits the tetramer. Each RuvB hexamer is contacted by two RuvA subunits (via domain III) on 2 adjacent RuvB subunits; this complex drives branch migration. In the full resolvosome a probable DNA-RuvA(4)-RuvB(12)-RuvC(2) complex forms which resolves the HJ.

The protein localises to the cytoplasm. The enzyme catalyses ATP + H2O = ADP + phosphate + H(+). Functionally, the RuvA-RuvB-RuvC complex processes Holliday junction (HJ) DNA during genetic recombination and DNA repair, while the RuvA-RuvB complex plays an important role in the rescue of blocked DNA replication forks via replication fork reversal (RFR). RuvA specifically binds to HJ cruciform DNA, conferring on it an open structure. The RuvB hexamer acts as an ATP-dependent pump, pulling dsDNA into and through the RuvAB complex. RuvB forms 2 homohexamers on either side of HJ DNA bound by 1 or 2 RuvA tetramers; 4 subunits per hexamer contact DNA at a time. Coordinated motions by a converter formed by DNA-disengaged RuvB subunits stimulates ATP hydrolysis and nucleotide exchange. Immobilization of the converter enables RuvB to convert the ATP-contained energy into a lever motion, pulling 2 nucleotides of DNA out of the RuvA tetramer per ATP hydrolyzed, thus driving DNA branch migration. The RuvB motors rotate together with the DNA substrate, which together with the progressing nucleotide cycle form the mechanistic basis for DNA recombination by continuous HJ branch migration. Branch migration allows RuvC to scan DNA until it finds its consensus sequence, where it cleaves and resolves cruciform DNA. This chain is Holliday junction branch migration complex subunit RuvB, found in Rhodococcus opacus (strain B4).